A 456-amino-acid polypeptide reads, in one-letter code: Short chain dehydrogenase tazN (456 aa).

Residues V45, D99, N126, R160, Y195, K199, and T229 each coordinate NADP(+). Y195 (proton donor) is an active-site residue. The Lowers pKa of active site Tyr role is filled by K199.

It belongs to the short-chain dehydrogenases/reductases (SDR) family.

It functions in the pathway secondary metabolite biosynthesis. Functionally, short chain dehydrogenase; part of the gene cluster that mediates the biosynthesis of azaterrilone A and other azaphilones, a class of fungal metabolites characterized by a highly oxygenated pyrano-quinone bicyclic core and exhibiting a broad range of bioactivities. The first step of the pathway begins with the non-reducing polyketide synthase tazA that assembles one acetyl-CoA starter unit, five malonyl-CoA units, and catalyzes a series of Claisen condensations, methylation, PT-mediated cyclization, and finally releases the first hexaketide precursor through the R-domain. The tazA product then undergoes reduction on its terminal ketone and the following pyran-ring formation by yet undetermined enzyme(s). Dehydration and enoyl reduction, possibly involving the trans-enoyl reductase tazE leads to the next intermediate. TazD is predicted as an acetyltransferase and might catalyze the acetylation steps leading to the synthesis of azaterrilone A. Azaterrilone A is not the final product of the taz pathway and both the highly reducing polyketide synthase tazB and the dual enzyme tazHJ catalyze late steps of the pathway, leading to the production of the 2 final stereoisomers that contain additional polyketide modification whose structures have still to be determined. The polypeptide is Short chain dehydrogenase tazN (Aspergillus terreus (strain NIH 2624 / FGSC A1156)).